The primary structure comprises 413 residues: Probable alpha-amylase 2 (413 aa).

Substrate is bound by residues 74–75 and 191–196; these read YL and RFDFAR. The Nucleophile role is filled by D193. Residue E218 is the Proton donor of the active site. Residues W220, S222, Q239, D246, K280, 286–288, H299, Q305, K386, and W411 contribute to the substrate site; that span reads GWW.

This sequence belongs to the glycosyl hydrolase 13 family. Requires Ca(2+) as cofactor. In terms of tissue distribution, expressed in developing siliques.

Its subcellular location is the cytoplasm. The protein localises to the cytosol. It carries out the reaction Endohydrolysis of (1-&gt;4)-alpha-D-glucosidic linkages in polysaccharides containing three or more (1-&gt;4)-alpha-linked D-glucose units.. Probable alpha-amylase that does not seem to be required for breakdown of transitory starch in leaves. The chain is Probable alpha-amylase 2 (AMY2) from Arabidopsis thaliana (Mouse-ear cress).